Consider the following 130-residue polypeptide: Large ribosomal subunit protein eL32 (130 aa).

The protein belongs to the eukaryotic ribosomal protein eL32 family.

The protein is Large ribosomal subunit protein eL32 (rpl32e) of Pyrococcus abyssi (strain GE5 / Orsay).